The sequence spans 345 residues: Probable 3'(2'),5'-bisphosphate nucleotidase 4 (345 aa).

Asp46 serves as the catalytic Proton acceptor. 4 residues coordinate Mg(2+): Glu71, Asp134, Val136, and Asp137. Thr139 (proton acceptor) is an active-site residue. Adenosine 3',5'-bisphosphate contacts are provided by Thr139, Ser247, Lys250, and Arg264. Residues Ser247, Lys250, and Arg264 each contribute to the AMP site.

This sequence belongs to the inositol monophosphatase superfamily. The cofactor is Mg(2+).

The enzyme catalyses 3'-phosphoadenylyl sulfate + H2O = adenosine 5'-phosphosulfate + phosphate. It catalyses the reaction adenosine 3',5'-bisphosphate + H2O = AMP + phosphate. It carries out the reaction adenosine 2',5'-bisphosphate + H2O = AMP + phosphate. The catalysed reaction is 1D-myo-inositol 1,4-bisphosphate + H2O = 1D-myo-inositol 4-phosphate + phosphate. The enzyme catalyses 1D-myo-inositol 1,3,4-trisphosphate + H2O = 1D-myo-inositol 3,4-bisphosphate + phosphate. The protein operates within signal transduction; phosphatidylinositol signaling pathway. Its function is as follows. Phosphatase that converts adenosine 3'-phosphate 5'-phosphosulfate (PAPS) to adenosine 5'-phosphosulfate (APS) and 3'(2')-phosphoadenosine 5'-phosphate (PAP) to AMP. Is also able to hydrolyze inositol 1,4-bisphosphate and inositol 1,3,4-trisphosphate. This chain is Probable 3'(2'),5'-bisphosphate nucleotidase 4 (SAL4), found in Arabidopsis thaliana (Mouse-ear cress).